Consider the following 671-residue polypeptide: tRNA(Met) cytidine acetyltransferase TmcA (671 aa).

Residues Gln180, Gly202–Gln211, and Arg319 each bind ATP. The N-acetyltransferase domain occupies Ile349–Leu531. Acetyl-CoA-binding positions include Ile461–Val463, Gln468–Gln474, Glu499, and Arg506.

This sequence belongs to the RNA cytidine acetyltransferase family. TmcA subfamily.

The protein localises to the cytoplasm. The enzyme catalyses cytidine(34) in elongator tRNA(Met) + acetyl-CoA + ATP + H2O = N(4)-acetylcytidine(34) in elongator tRNA(Met) + ADP + phosphate + CoA + H(+). Its function is as follows. Catalyzes the formation of N(4)-acetylcytidine (ac(4)C) at the wobble position of tRNA(Met), by using acetyl-CoA as an acetyl donor and ATP (or GTP). The sequence is that of tRNA(Met) cytidine acetyltransferase TmcA from Citrobacter koseri (strain ATCC BAA-895 / CDC 4225-83 / SGSC4696).